The sequence spans 204 residues: Small ribosomal subunit protein uS4 (204 aa).

Positions R94 to L157 constitute an S4 RNA-binding domain.

Belongs to the universal ribosomal protein uS4 family. In terms of assembly, part of the 30S ribosomal subunit. Contacts protein S5. The interaction surface between S4 and S5 is involved in control of translational fidelity.

In terms of biological role, one of the primary rRNA binding proteins, it binds directly to 16S rRNA where it nucleates assembly of the body of the 30S subunit. With S5 and S12 plays an important role in translational accuracy. This is Small ribosomal subunit protein uS4 from Sulfurihydrogenibium sp. (strain YO3AOP1).